Reading from the N-terminus, the 756-residue chain is ATP-dependent zinc metalloprotease FtsH (756 aa).

Topologically, residues 1–44 (MGVPAGMPHPNGLQPQRKDKALAQNPNTPQKGSEAFLKKLIHSS) are cytoplasmic. The chain crosses the membrane as a helical span at residues 45–65 (WFFPGAAIVVMLGFLMASFFT). The Extracellular portion of the chain corresponds to 66-148 (QPSRQVDTNV…SYTDQPVEHS (83 aa)). A helical membrane pass occupies residues 149-169 (FLGSLVSLLLPILLFGVLFWF). The Cytoplasmic portion of the chain corresponds to 170-756 (LMGRVGGGSS…NQNGAENERG (587 aa)). 241 to 248 (GPPGTGKT) serves as a coordination point for ATP. Residue His-463 coordinates Zn(2+). Residue Glu-464 is part of the active site. His-467 and Asp-539 together coordinate Zn(2+). Composition is skewed to basic and acidic residues over residues 647-662 (PERE…ERTD) and 672-681 (LAKEAEKSEE). A disordered region spans residues 647 to 756 (PEREHWYSKP…NQNGAENERG (110 aa)). Low complexity-rich tracts occupy residues 684 to 703 (AEAP…VPVA) and 713 to 724 (PLTDPDADPTVA). The segment covering 744–756 (GTPNQNGAENERG) has biased composition (polar residues).

This sequence in the central section; belongs to the AAA ATPase family. In the C-terminal section; belongs to the peptidase M41 family. Homohexamer. It depends on Zn(2+) as a cofactor.

Its subcellular location is the cell membrane. In terms of biological role, acts as a processive, ATP-dependent zinc metallopeptidase for both cytoplasmic and membrane proteins. Plays a role in the quality control of integral membrane proteins. In Rothia mucilaginosa (strain DY-18) (Stomatococcus mucilaginosus), this protein is ATP-dependent zinc metalloprotease FtsH.